Reading from the N-terminus, the 84-residue chain is RNA-binding protein SAHV_0542 (84 aa).

Belongs to the eukaryotic ribosomal protein eL8 family.

The protein is RNA-binding protein SAHV_0542 of Staphylococcus aureus (strain Mu3 / ATCC 700698).